A 4194-amino-acid polypeptide reads, in one-letter code: Hybrid PKS-NRPS synthetase pydA (4194 aa).

One can recognise a Ketosynthase family 3 (KS3) domain in the interval 14–450; the sequence is REPIAVVGSG…GTNAHAIVEN (437 aa). Residues C187, H326, and H370 each act as for beta-ketoacyl synthase activity in the active site. Residues 565-887 form the Malonyl-CoA:ACP transacylase (MAT) domain; that stretch reads VFTGQGAQWA…QRGKDDVQAF (323 aa). Residues 953–1088 form an N-terminal hotdog fold region; it reads HPLLGTRTTD…GRVIVITGEA (136 aa). Positions 953-1257 constitute a PKS/mFAS DH domain; the sequence is HPLLGTRTTD…VVSFSEPTAE (305 aa). Catalysis depends on H985, which acts as the Proton acceptor; for dehydratase activity. The tract at residues 1103-1257 is C-terminal hotdog fold; it reads LVDIPEDRFY…VVSFSEPTAE (155 aa). D1163 serves as the catalytic Proton donor; for dehydratase activity. Positions 1302-1596 are methyltransferase (cMeT) domain; the sequence is YMRQLASLFP…FSGVDSTTHE (295 aa). The Ketoreductase (KR) domain maps to 2141–2314; sequence TYVFFGLTSD…AGSILHIGAV (174 aa). The Carrier 1 domain occupies 2421–2505; the sequence is TTAEEALEIV…ELVEFAVENM (85 aa). S2465 bears the O-(pantetheine 4'-phosphoryl)serine mark. The segment at 2512–2583 is disordered; that stretch reads NMSDSLNAVP…ERDSSTASLE (72 aa). Positions 2526 to 2547 are enriched in low complexity; sequence APVIPASPPSGSVSSAPSSDPP. Polar residues predominate over residues 2550-2565; that stretch reads TAETSQHLSESSSKTS. The span at 2566 to 2577 shows a compositional bias: basic and acidic residues; that stretch reads QPDEKQSEERDS. Residues 2591 to 3023 are condensation; sequence EKVLPVSPGQ…QILKDVSLFT (433 aa). Positions 3056–3467 are adenylation; it reads ANPPQEIALR…RIEGDTQIKL (412 aa). A Carrier 2 domain is found at 3580–3660; the sequence is TQLTEAESEL…AMAAVIQDLS (81 aa). S3620 is modified (O-(pantetheine 4'-phosphoryl)serine). One can recognise a Thioester reductase (TE) domain in the interval 3701–3920; sequence ITGATGFLGK…VDLISVERAA (220 aa). Disordered stretches follow at residues 4031–4110 and 4163–4194; these read RRDK…DEQI and KGEY…EPDD. Over residues 4057–4072 the composition is skewed to basic and acidic residues; that stretch reads RGRDVSPRHPALDHPD. Acidic residues predominate over residues 4174–4183; it reads EEAEEAEWQC. Residues 4184 to 4194 show a composition bias toward basic and acidic residues; the sequence is DEGHGDGEPDD.

It in the C-terminal section; belongs to the NRP synthetase family. It depends on pantetheine 4'-phosphate as a cofactor.

It participates in mycotoxin biosynthesis. Functionally, hybrid PKS-NRPS synthetase; part of the gene cluster that mediates the biosynthesis of pyrrocidines, fungal natural products containing a macrocyclic para-cyclophane connected to a decahydrofluorene ring system that show potent antibiotic activities toward Gram-negative bacteria. Within the pathway, the PKS-NRPS pydA, with the help of the trans-enoyl reductase pydC, synthesize the polyketide-tyrosyl acyl thioester product which can be reductively off-loaded by the terminal reductase (R) domain in pydA. The PKS module of pydA acts in combination with the trans-acting enoyl reductase pydC to produce a methylated polyketide attached to the ACP domain. In parallel, the adenylation (A) domain of the NRPS module activated L-tyrosine, which is then transferred to the ACP domain. The condensation (C) domain subsequently link this group to the polyketide chain, forming an enzyme-bound amide. The alpha/beta hydrolase pydG is then required to catalyze the subsequent Knoevenagel condensation that affords the 3-pyrrolin-2-one ring, whereas the four proteins pydB, pydE, pydX and pydZ then function synergistically to form the cyclophane. PydB and the membrane-bound pydX and pydZ are lipid-binding proteins that can sequester and mold the pdyG product into the inverse S-shape. Binding of the medium chain reductase pydE to the complex would trigger the cascade oxidative cyclization. PydY is involved in the Diels-Alder cycloaddition that forms the decahydrofluorene core. Additional non-enzymatic hydroxylation yields pyrrocidine A2 which can be further reduced into pyrrocidine B by an endogenous reductase. This is Hybrid PKS-NRPS synthetase pydA from Acremonium sp.